A 560-amino-acid chain; its full sequence is Probable pectinesterase/pectinesterase inhibitor 20 (560 aa).

Residues 1–24 (MSQKLMFLFTLACLSSLPSPFISA) form the signal peptide. Positions 25–179 (QIPAIGNATS…TKLYGVSLAL (155 aa)) are pectinesterase inhibitor 20. N-linked (GlcNAc...) asparagine glycosylation is found at N31, N168, N251, N255, N268, N307, and N314. Residues 246–544 (VTVIQNGTGN…FTVTNFLVGE (299 aa)) are pectinesterase 20. T323 is a binding site for substrate. N-linked (GlcNAc...) asparagine glycosylation occurs at N340. Position 353 (Q353) interacts with substrate. The Proton donor; for pectinesterase activity role is filled by D376. A disulfide bridge connects residues C390 and C410. D397 (nucleophile; for pectinesterase activity) is an active-site residue. A disordered region spans residues 417 to 441 (PRKGQSNEVTAQGRTDPNQNTGTAI). The span at 419 to 439 (KGQSNEVTAQGRTDPNQNTGT) shows a compositional bias: polar residues. N-linked (GlcNAc...) asparagine glycosylation occurs at N456. Positions 465 and 467 each coordinate substrate. N507, N528, and N534 each carry an N-linked (GlcNAc...) asparagine glycan.

This sequence in the N-terminal section; belongs to the PMEI family. It in the C-terminal section; belongs to the pectinesterase family. As to expression, expressed in flower buds.

Its subcellular location is the secreted. The protein resides in the cell wall. The enzyme catalyses [(1-&gt;4)-alpha-D-galacturonosyl methyl ester](n) + n H2O = [(1-&gt;4)-alpha-D-galacturonosyl](n) + n methanol + n H(+). The protein operates within glycan metabolism; pectin degradation; 2-dehydro-3-deoxy-D-gluconate from pectin: step 1/5. Its function is as follows. Acts in the modification of cell walls via demethylesterification of cell wall pectin. The chain is Probable pectinesterase/pectinesterase inhibitor 20 (PME20) from Arabidopsis thaliana (Mouse-ear cress).